Consider the following 999-residue polypeptide: Probable hemoglobin and hemoglobin-haptoglobin-binding protein 4 (999 aa).

An N-terminal signal peptide occupies residues 1–24 (MTNFRLNVLAYSVMLGLTASVAYA). The interval 25 to 52 (EPTNQPTNQPTNQPTNQPTNQPTNQNSN) is disordered. Repeat copies occupy residues 26–29 (PTNQ), 30–33 (PTNQ), 34–37 (PTNQ), 38–41 (PTNQ), 42–45 (PTNQ), and 46–49 (PTNQ). The interval 26 to 49 (PTNQPTNQPTNQPTNQPTNQPTNQ) is 6 X 4 AA tandem repeats of P-T-N-Q. Low complexity predominate over residues 26–50 (PTNQPTNQPTNQPTNQPTNQPTNQN). The short motif at 58 to 65 (EQINVLGS) is the TonB box element. One can recognise a TBDR plug domain in the interval 68 to 195 (NNDNTPPKIA…LGGAVLFETK (128 aa)). Positions 203–999 (EKDWHIGYKA…NYKLSAEITF (797 aa)) constitute a TBDR beta-barrel domain. A TonB C-terminal box motif is present at residues 982 to 999 (NRFYSPGRNYKLSAEITF).

It belongs to the TonB-dependent receptor family. Hemoglobin/haptoglobin binding protein subfamily.

It localises to the cell outer membrane. Acts as a receptor for hemoglobin or the hemoglobin/haptoglobin complex of the human host and is required for heme uptake. The sequence is that of Probable hemoglobin and hemoglobin-haptoglobin-binding protein 4 from Haemophilus influenzae (strain ATCC 51907 / DSM 11121 / KW20 / Rd).